Here is a 587-residue protein sequence, read N- to C-terminus: Serine/threonine-protein phosphatase 2A 65 kDa regulatory subunit A beta isoform (587 aa).

An N-acetylserine modification is found at serine 2. 14 HEAT repeats span residues 2–42 (SMID…ALGE), 44–80 (RTRKELIPFLSENNDDDDEVLLAMAEELGVFIPYVGG), 81–119 (VEYAHVLLPPLETLSTVEETCVREKAVESLCRVGSQMRE), 158–196 (DMLKTELRSLYTQLCQDDMPMVRRAAATNLGKFAATVES), 197–235 (AHLKTDVMSMFEDLTQDDQDSVRLLAVEGCAALGKLLEP), 236–274 (QDCVQHILPVIVNFSQDKSWRVRYMVANQLYELCEAVGP), 275–313 (EPTRTELVPAYVRLLRDNEAEVRIAAAGKVTKFCRILNP), 315–352 (IAIQHILPCVKELSSDSSQHVRSALASVIMGMAPVLGK), 353–391 (DATIEHLLPIFLSLLKDEFPDVRLNIISKLDQVNQVIGI), 393–430 (LLSQSLLPAIVELAEDRHWRVRLAIIEYIPLLASQLGV), 432–469 (FFDDKLGALCMQWLQDKVHSIRDAAANNLKRLAEEFGP), 470–508 (EWAMQHIVPQVLEMVNNPHYLYRMTILRAVSLLAPVMGS), 509–547 (EITCSKLLPVVMTASKDRVPNIKFNVAKVLQSLIPIVDQ), and 549–586 (VVEKTIRPGLVELSEDPDVDVRFFANQALQSIDNVMMS).

Belongs to the phosphatase 2A regulatory subunit A family. PP2A consists of a common heterodimeric core enzyme, composed of a 36 kDa catalytic subunit (subunit C) and a 65 kDa constant regulatory subunit (subunit A), that associates with a variety of regulatory subunits such as subunits B (the R2/B/PR55/B55, R3/B''/PR72/PR130/PR59 and R5/B'/B56 families). Interacts with B'THETA. Interacts with SRK2E/OST1. Interacts with SIC/RON3. Ubiquitous, with higher levels in roots and flowers (at protein level).

The protein localises to the cytoplasm. It localises to the cytosol. It is found in the nucleus. The protein resides in the peroxisome. In terms of biological role, the A subunit of protein phosphatase 2A serves as a scaffolding molecule to coordinate the assembly of the catalytic subunit and a variable regulatory B subunit. Involved during developmental process such as seedling and floral developments. Seems to act as a negative regulator of PP2A catalytic activity. Associates with the serine/threonine-protein phosphatase PP2A catalytic subunit C and regulatory subunit B' to positively regulates beta-oxidation of fatty acids and protoauxins in peroxisomes by dephosphorylating peroxisomal beta-oxidation-related proteins. In Arabidopsis thaliana (Mouse-ear cress), this protein is Serine/threonine-protein phosphatase 2A 65 kDa regulatory subunit A beta isoform (PP2AA2).